The sequence spans 571 residues: Glutamate--tRNA ligase (571 aa).

The short motif at 114–124 (PNPNGPWHVGH) is the 'HIGH' region element. The disordered stretch occupies residues 431–453 (KPLAGGPESASPPLHPNDEDRGR).

It belongs to the class-I aminoacyl-tRNA synthetase family. Glutamate--tRNA ligase type 2 subfamily.

The protein localises to the cytoplasm. It catalyses the reaction tRNA(Glu) + L-glutamate + ATP = L-glutamyl-tRNA(Glu) + AMP + diphosphate. Functionally, catalyzes the attachment of glutamate to tRNA(Glu) in a two-step reaction: glutamate is first activated by ATP to form Glu-AMP and then transferred to the acceptor end of tRNA(Glu). In Natronomonas pharaonis (strain ATCC 35678 / DSM 2160 / CIP 103997 / JCM 8858 / NBRC 14720 / NCIMB 2260 / Gabara) (Halobacterium pharaonis), this protein is Glutamate--tRNA ligase.